We begin with the raw amino-acid sequence, 479 residues long: Replication factor C large subunit (479 aa).

An ATP-binding site is contributed by glycine 43–threonine 50. The interval glutamate 441 to serine 479 is disordered. A compositionally biased stretch (basic and acidic residues) spans glutamate 452–arginine 463.

This sequence belongs to the activator 1 small subunits family. RfcL subfamily. Heteropentamer composed of four small subunits (RfcS) and one large subunit (RfcL). Both subunits interact with PCNA.

Part of the RFC clamp loader complex which loads the PCNA sliding clamp onto DNA. The complex possesses DNA-dependent ATPase activity which is further stimulated by PCNA. The protein is Replication factor C large subunit (rfcL) of Archaeoglobus fulgidus (strain ATCC 49558 / DSM 4304 / JCM 9628 / NBRC 100126 / VC-16).